A 282-amino-acid polypeptide reads, in one-letter code: Protein GAM-1 (282 aa).

A BC-box-like motif is present at residues 251–260; sequence SLQDWARLGV.

In terms of assembly, interacts with host HDAC1. Interacts with host E1-activating enzyme (SAE1/UBA2 heterodimer). Interacts with host retinoblastoma protein. Seems to form a complex with host E4F1 and HDAC1. Seems to form complexes with either CUL2-elongin BC complex-RBX1 or CUL5-elongin BC complex-RBX1. Interacts with TCEB1/Elongin-C, CUL2 and CUL5 in vitro.

Its subcellular location is the host nucleus. Functionally, early protein essential for viral replication. Strong and global transcriptional activator of both viral and cellular genes. Activates transcription by blocking host retinoblastoma protein (RB) and inhibiting the SUMO pathway. Inhibition of host RB leads to the activation of E2F1-dependent transcription and, in particular, of E2F1-regulated S-phase genes. Stimulation of progression from G1 to S phase allows the virus to efficiently use the cellular DNA replicating machinery to achieve viral genome replication. Blocks the SUMO pathway by targeting the E1 enzyme (SAE1/UBA2 heterodimer) to the ubiquitin-proteasome machinery. Mediates SAE1 degradation possibly through the formation of complexes with either CUL2-elongin BC complex-RBX1 or CUL5-elongin BC complex-RBX1. The degradation of UBA2 is probably a consequent effect of SAE1 disappearance. Inhibits HDAC1 sumoylation, thereby interfering with histone deacetylation mediated by HDAC1, leading to activation of transcription. Mediates induction of heat-shock response. Seems to have an antiapoptotic function. In Galliformes (FAdV-1), this protein is Protein GAM-1.